The primary structure comprises 487 residues: Probable cytochrome P450 513B1 (487 aa).

Residues 1-18 (MNLLVLSVILAIIIYLIF) form a helical membrane-spanning segment. Heme is bound at residue cysteine 433.

This sequence belongs to the cytochrome P450 family. Heme is required as a cofactor.

The protein localises to the membrane. The protein is Probable cytochrome P450 513B1 (cyp513B1) of Dictyostelium discoideum (Social amoeba).